A 781-amino-acid chain; its full sequence is MTAPEKPVKQEEMAALDVDSGGGGGGGGGHGEYLQQQQQHGNGAVAAAAAAQDTQPSPLALLAATCSKIGPPSPGDDEEEAAAAAGAPAAAGATGDLASAQLGGAPNRWEVLSATPTTIKDEAGNLVQIPSAATSSGQYVLPLQNLQNQQIFSVAPGSDSSNGTVSSVQYQVIPQIQSADGQQVQIGFTGSSDNGGINQESSQIQIIPGSNQTLLASGTPSANIQNLIPQTGQVQVQGVAIGGSSFPGQTQVVANVPLGLPGNITFVPINSVDLDSLGLSGSSQTMTAGINADGHLINTGQAMDSSDNSERTGERVSPDINETNTDTDLFVPTSSSSQLPVTIDSTGILQQNTNSLTTSSGQVHSSDLQGNYIQSPVSEETQAQNIQVSTAQPVVQHLQLQESQQPTSQAQIVQGITPQTIHGVQASGQNISQQALQNLQLQLNPGTFLIQAQTVTPSGQVTWQTFQVQGVQNLQNLQIQNTAAQQITLTPVQTLTLGQVAAGGAFTSTPVSLSTGQLPNLQTVTVNSIDSAGIQLHPGENADSPADIRIKEEEPDPEEWQLSGDSTLNTNDLTHLRVQVVDEEGDQQHQEGKRLRRVACTCPNCKEGGGRGTNLGKKKQHICHIPGCGKVYGKTSHLRAHLRWHSGERPFVCNWMYCGKRFTRSDELQRHRRTHTGEKKFVCPECSKRFMRSDHLAKHIKTHQNKKGIHSSSTVLASVEAARDDTLITAGGTTLILANIQQGSVSGIGTVNTSATSNQDILTNTEIPLQLVTVSGNETME.

Over residues 1–12 (MTAPEKPVKQEE) the composition is skewed to basic and acidic residues. Disordered stretches follow at residues 1 to 53 (MTAP…AAQD) and 65 to 88 (TCSKIGPPSPGDDEEEAAAAAGAP). Residues 20 to 31 (SGGGGGGGGGHG) are compositionally biased toward gly residues. Residues 32–53 (EYLQQQQQHGNGAVAAAAAAQD) are compositionally biased toward low complexity. Residue serine 73 is modified to Phosphoserine. Residue lysine 120 forms a Glycyl lysine isopeptide (Lys-Gly) (interchain with G-Cter in SUMO) linkage. The transactivation domain (Gln-rich) stretch occupies residues 138–237 (QYVLPLQNLQ…IPQTGQVQVQ (100 aa)). The segment at 301 to 338 (QAMDSSDNSERTGERVSPDINETNTDTDLFVPTSSSSQ) is disordered. Positions 308 to 317 (NSERTGERVS) are enriched in basic and acidic residues. Residues 320 to 338 (INETNTDTDLFVPTSSSSQ) show a composition bias toward polar residues. The segment at 350-499 (QQNTNSLTTS…TPVQTLTLGQ (150 aa)) is transactivation domain (Gln-rich). Positions 461–469 (VTWQTFQVQ) match the 9aaTAD motif. Positions 534 to 620 (IQLHPGENAD…RGTNLGKKKQ (87 aa)) are repressor domain. At lysine 551 the chain carries N6-acetyllysine; alternate. A Glycyl lysine isopeptide (Lys-Gly) (interchain with G-Cter in SUMO); alternate cross-link involves residue lysine 551. A Glycyl lysine isopeptide (Lys-Gly) (interchain with G-Cter in SUMO1); alternate cross-link involves residue lysine 551. Lysine 551 is covalently cross-linked (Glycyl lysine isopeptide (Lys-Gly) (interchain with G-Cter in SUMO2); alternate). Phosphoserine occurs at positions 563 and 566. A Glycyl lysine isopeptide (Lys-Gly) (interchain with G-Cter in SUMO2) cross-link involves residue lysine 593. The segment at 621–645 (HICHIPGCGKVYGKTSHLRAHLRWH) adopts a C2H2-type 1 zinc-finger fold. A Phosphoserine modification is found at serine 646. C2H2-type zinc fingers lie at residues 651 to 675 (FVCNWMYCGKRFTRSDELQRHRRTH) and 681 to 703 (FVCPECSKRFMRSDHLAKHIKTH).

Belongs to the Sp1 C2H2-type zinc-finger protein family. In terms of assembly, interacts with HLTF; the interaction may be required for basal transcriptional activity of HLTF. Interacts with HDAC1; the interaction deacetylates SP3 and regulates its transcriptional activity. Interacts with HDAC2 (preferably the CK2-phosphorylated form); the interaction deacetylates SP3 and regulates its transcriptional activity. Interacts with MEIS2 isoform 4 and PBX1 isoform PBX1a. Post-translationally, not glycosylated. Acetylated by histone acetyltransferase p300, deacetylated by HDACs. Acetylation/deacetylation states regulate transcriptional activity. Acetylation appears to activate transcription. Alternate sumoylation and acetylation at Lys-551 also control transcriptional activity. Ceramides can also regulate acetylation/deacetylation events through altering the interaction of HDAC with SP3. In vitro, C(18)-ceramides, but not C(16)-ceramides, increase the interaction of HDAC1 with SP3 and enhance the deacetylation of SP3 and the subsequent repression of the TERT promoter. In terms of processing, sumoylated on all isoforms. Sumoylated on 2 sites in longer isoforms with Lys-551 being the major site. Sumoylation at this site promotes nuclear localization to the nuclear periphery, nuclear dots and PML nuclear bodies. Sumoylation on Lys-551 represses the transactivation activity, except for the largest isoform, L-Sp3, which has little effect on transactivation. Alternate sumoylation and acetylation at Lys-551 also control transcriptional activity. Ubiquitously expressed.

Its subcellular location is the nucleus. The protein resides in the PML body. Its function is as follows. Transcriptional factor that can act as an activator or repressor depending on isoform and/or post-translational modifications. Binds to GT and GC boxes promoter elements. Competes with SP1 for the GC-box promoters. Weak activator of transcription but can activate a number of genes involved in different processes such as cell-cycle regulation, hormone-induction and house-keeping. This chain is Transcription factor Sp3 (SP3), found in Homo sapiens (Human).